The following is a 489-amino-acid chain: Probable cytosol aminopeptidase (489 aa).

Positions 255 and 260 each coordinate Mn(2+). The active site involves K267. Positions 279, 339, and 341 each coordinate Mn(2+). R343 is an active-site residue.

Belongs to the peptidase M17 family. Mn(2+) serves as cofactor.

It localises to the cytoplasm. The catalysed reaction is Release of an N-terminal amino acid, Xaa-|-Yaa-, in which Xaa is preferably Leu, but may be other amino acids including Pro although not Arg or Lys, and Yaa may be Pro. Amino acid amides and methyl esters are also readily hydrolyzed, but rates on arylamides are exceedingly low.. The enzyme catalyses Release of an N-terminal amino acid, preferentially leucine, but not glutamic or aspartic acids.. Its function is as follows. Presumably involved in the processing and regular turnover of intracellular proteins. Catalyzes the removal of unsubstituted N-terminal amino acids from various peptides. The sequence is that of Probable cytosol aminopeptidase from Synechococcus sp. (strain CC9605).